A 790-amino-acid polypeptide reads, in one-letter code: Vacuolar protein sorting-associated protein 35C (790 aa).

N-acetylmethionine is present on Met-1.

The protein belongs to the VPS35 family. As to quaternary structure, component of the retromer complex which consists of VPS29 (MAG1), VPS26 (VPS26A or VPS26B), VPS35 (VPS35A or VPS35B or VPS35C), VPS5/17 (SNX1 or SNX2A or SNX2B). Component of a retromer subcomplex consisting of VPS29 (MAG1), VPS26 (VPS26A or VPS26B), VPS35 (VPS35A or VPS35B or VPS35C).

Its subcellular location is the cytoplasm. The protein localises to the endosome membrane. It localises to the prevacuolar compartment membrane. It is found in the golgi apparatus. The protein resides in the trans-Golgi network membrane. Its function is as follows. Plays a role in vesicular protein sorting. Component of the membrane-associated retromer complex which is essential in endosome-to-Golgi retrograde transport. Also involved in the efficient sorting of seed storage proteins. The VPS29-VPS26-VPS35 subcomplex may be involved in recycling of specific cargos from endosome to the plasma membrane. This is Vacuolar protein sorting-associated protein 35C (VPS35C) from Arabidopsis thaliana (Mouse-ear cress).